We begin with the raw amino-acid sequence, 213 residues long: Putative cytochrome c-type biogenesis protein HI_1454 (213 aa).

The next 6 membrane-spanning stretches (helical) occupy residues 15–35 (GLAS…FGIL), 46–66 (FLFI…FGFL), 77–97 (IIAG…FKIG), 118–138 (AFVL…PILA), 154–174 (ASMM…FSFF), and 192–212 (FKIG…TNNF).

The protein belongs to the DsbD family.

The protein localises to the cell membrane. Could be involved in cytochrome c synthesis. The polypeptide is Putative cytochrome c-type biogenesis protein HI_1454 (Haemophilus influenzae (strain ATCC 51907 / DSM 11121 / KW20 / Rd)).